The sequence spans 238 residues: Ribonuclease PH (238 aa).

Phosphate-binding positions include Arg86 and 124 to 126 (GTR).

Belongs to the RNase PH family. As to quaternary structure, homohexameric ring arranged as a trimer of dimers.

It carries out the reaction tRNA(n+1) + phosphate = tRNA(n) + a ribonucleoside 5'-diphosphate. Phosphorolytic 3'-5' exoribonuclease that plays an important role in tRNA 3'-end maturation. Removes nucleotide residues following the 3'-CCA terminus of tRNAs; can also add nucleotides to the ends of RNA molecules by using nucleoside diphosphates as substrates, but this may not be physiologically important. Probably plays a role in initiation of 16S rRNA degradation (leading to ribosome degradation) during starvation. The protein is Ribonuclease PH of Shigella boydii serotype 18 (strain CDC 3083-94 / BS512).